The chain runs to 308 residues: Ribosomal RNA large subunit methyltransferase F (308 aa).

This sequence belongs to the methyltransferase superfamily. METTL16/RlmF family.

Its subcellular location is the cytoplasm. It catalyses the reaction adenosine(1618) in 23S rRNA + S-adenosyl-L-methionine = N(6)-methyladenosine(1618) in 23S rRNA + S-adenosyl-L-homocysteine + H(+). In terms of biological role, specifically methylates the adenine in position 1618 of 23S rRNA. In Shigella dysenteriae serotype 1 (strain Sd197), this protein is Ribosomal RNA large subunit methyltransferase F.